The following is a 185-amino-acid chain: Ribosome-recycling factor (185 aa).

This sequence belongs to the RRF family.

Its subcellular location is the cytoplasm. Functionally, responsible for the release of ribosomes from messenger RNA at the termination of protein biosynthesis. May increase the efficiency of translation by recycling ribosomes from one round of translation to another. The chain is Ribosome-recycling factor from Mannheimia succiniciproducens (strain KCTC 0769BP / MBEL55E).